The sequence spans 986 residues: MSRIESLTRARIDRSRELASKTREKEKMKEAKDARYTNGHLFTTISVSGMTMCYACNKSITAKEALICPTCNVTIHNRCKDTLANCTKVKQKQQKAALLKNNTALQSVSLRSKTTIRERPSSAIYPSDSFRQSLLGSRRGRSSLSLAKSVSTTNIAGHFNDESPLGLRRILSQSTDSLNMRNRTLSVESLIDEAEVIYSELMSDFEMDEKDFAADSWSLAVDSSFLQQHKKEVMKQQDVIYELIQTELHHVRTLKIMTRLFRTGMLEELHLEPGVVQGLFPCVDELSDIHTRFLSQLLERRRQALCPGSTRNFVIHRLGDLLISQFSGPSAEQMCKTYSEFCSRHSKALKLYKELYARDKRFQQFIRKVTRPAVLKRHGVQECILLVTQRITKYPLLISRILQHSHGIEEERQDLTTALGLVKELLSNVDEGIYQLEKGARLQEIYNRMDPRAQTPVPGKGPFGREELLRRKLIHDGCLLWKTATGRFKDVLVLLMTDVLVFLQEKDQKYIFPTLDKPSVVSLQNLIVRDIANQEKGMFLISAAPPEMYEVHTASRDDRSTWIRVIQQSVRTCPSREDFPLIETEDEAYLRRIKMELQQKDRALVELLREKVGLFAEMTHFQAEEDGGSGMALPTLPRGLFRSESLESPRGERLLQDAIREVEGLKDLLVGPGVELLLTPREPALPLEPDSGGNTSPGVTANGEARTFNGSIELCRADSDSSQRDRNGNQLRSPQEEALQRLVNLYGLLHGLQAAVAQQDTLMEARFPEGPERREKLCRANSRDGEAGRAGAAPVAPEKQATELALLQRQHALLQEELRRCRRLGEERATEAGSLEARLRESEQARALLEREAEEARRQLAALGQTEPLPAEAPWARRPVDPRRRSLPAGDALYLSFNPPQPSRGTDRLDLPVTTRSVHRNFEDRERQELGSPEERLQDSSDPDTGSEEEGSSRLSPPHSPRDFTRMQDIPEETESRDGEAVASES.

The Phorbol-ester/DAG-type zinc finger occupies 39-86; sequence GHLFTTISVSGMTMCYACNKSITAKEALICPTCNVTIHNRCKDTLANC. Residues Ser109, Ser122, Ser129, Ser133, and Ser137 each carry the phosphoserine modification. The tract at residues 131–161 is interaction with DYNLT1; the sequence is RQSLLGSRRGRSSLSLAKSVSTTNIAGHFND. A Phosphoserine; by PAK4 modification is found at Ser143. 5 positions are modified to phosphoserine: Ser151, Ser163, Ser172, Ser174, and Ser177. A DH domain is found at 235–432; it reads KQQDVIYELI…KELLSNVDEG (198 aa). Lys353 carries the N6-acetyllysine modification. Positions 472-571 constitute a PH domain; it reads KLIHDGCLLW…WIRVIQQSVR (100 aa). Positions 587–611 form a coiled coil; the sequence is EAYLRRIKMELQQKDRALVELLREK. Phosphoserine is present on residues Ser645 and Ser648. At Thr679 the chain carries Phosphothreonine; by MAPK1 or MAPK3. A disordered region spans residues 683-705; sequence PALPLEPDSGGNTSPGVTANGEA. A phosphoserine mark is found at Ser691, Ser696, Ser711, and Ser782. Residues 798 to 867 are a coiled coil; sequence EKQATELALL…RQLAALGQTE (70 aa). The segment at 862-986 is disordered; sequence ALGQTEPLPA…RDGEAVASES (125 aa). Ser886 bears the Phosphoserine; by PAK1 and AURKA mark. The residue at position 894 (Tyr894) is a Phosphotyrosine. Residue Ser896 is modified to Phosphoserine; by PAK4. Over residues 920-939 the composition is skewed to basic and acidic residues; sequence RNFEDRERQELGSPEERLQD. 3 positions are modified to phosphoserine: Ser932, Ser940, and Ser941. Residues 941–950 show a composition bias toward acidic residues; it reads SDPDTGSEEE. Thr945 bears the Phosphothreonine mark. Ser947, Ser952, Ser953, Ser956, and Ser960 each carry phosphoserine.

Found in a complex composed at least of ARHGEF2, NOD2 and RIPK2. Interacts with RIPK2; the interaction mediates tyrosine phosphorylation of RIPK2 by Src kinase CSK. Interacts with RIPK1 and RIPK3. Interacts with YWHAZ/14-3-3 zeta; when phosphorylated at Ser-886. Interacts with the kinases PAK4, AURKA and MAPK1. Interacts with RHOA and RAC1. Interacts with NOD1. Interacts (via the N-terminal zinc finger) with CAPN6 (via domain II). Interacts with DYNLT1. In terms of processing, phosphorylation of Ser-886 by PAK1 induces binding to protein YWHAZ, promoting its relocation to microtubules and the inhibition of its activity. Phosphorylated by AURKA and CDK1 during mitosis, which negatively regulates its activity. Phosphorylation by MAPK1 or MAPK3 increases nucleotide exchange activity. Phosphorylation by PAK4 releases GEF-H1 from the microtubules. Phosphorylated on serine, threonine and tyrosine residues in a RIPK2-dependent manner.

It localises to the cytoplasm. The protein localises to the cytoskeleton. Its subcellular location is the cell junction. It is found in the tight junction. The protein resides in the golgi apparatus. It localises to the spindle. The protein localises to the cell projection. Its subcellular location is the ruffle membrane. It is found in the cytoplasmic vesicle. Its function is as follows. Activates Rho-GTPases by promoting the exchange of GDP for GTP. May be involved in epithelial barrier permeability, cell motility and polarization, dendritic spine morphology, antigen presentation, leukemic cell differentiation, cell cycle regulation, innate immune response, and cancer. Binds Rac-GTPases, but does not seem to promote nucleotide exchange activity toward Rac-GTPases, which was uniquely reported in PubMed:9857026. May stimulate instead the cortical activity of Rac. Inactive toward CDC42, TC10, or Ras-GTPases. Forms an intracellular sensing system along with NOD1 for the detection of microbial effectors during cell invasion by pathogens. Required for RHOA and RIP2 dependent NF-kappaB signaling pathways activation upon S.flexneri cell invasion. Involved not only in sensing peptidoglycan (PGN)-derived muropeptides through NOD1 that is independent of its GEF activity, but also in the activation of NF-kappaB by Shigella effector proteins (IpgB2 and OspB) which requires its GEF activity and the activation of RhoA. Involved in innate immune signaling transduction pathway promoting cytokine IL6/interleukin-6 and TNF-alpha secretion in macrophage upon stimulation by bacterial peptidoglycans; acts as a signaling intermediate between NOD2 receptor and RIPK2 kinase. Contributes to the tyrosine phosphorylation of RIPK2 through Src tyrosine kinase leading to NF-kappaB activation by NOD2. Overexpression activates Rho-, but not Rac-GTPases, and increases paracellular permeability. Involved in neuronal progenitor cell division and differentiation. Involved in the migration of precerebellar neurons. This chain is Rho guanine nucleotide exchange factor 2 (ARHGEF2), found in Homo sapiens (Human).